The following is a 169-amino-acid chain: uncharacterized protein (169 aa).

A helical transmembrane segment spans residues 10–30 (YFVTILIIIIIILIVLLIVFL). The disordered stretch occupies residues 98 to 123 (QSKPINKNNQQTKNTPTPLDDRPDLS). Positions 100 to 115 (KPINKNNQQTKNTPTP) are enriched in low complexity.

Its subcellular location is the membrane. This is an uncharacterized protein from Acanthamoeba polyphaga (Amoeba).